Here is a 219-residue protein sequence, read N- to C-terminus: MTDRLTQLQRCLDQVMEQFCATLNFIDKRHDFEPFNDKEPKMTDKHASVATPEEFSNGIDELSTDIIVKIRQITTLIDSLPGVGVSAEEQLHKIDSLQKKLVDIEDEKIHAIKKKDDLLKQVDDLITVFVGGIADSRRGTSLAPENVQEDNDIKQEAEVPTSSEAIEQKIANEKIESKIEGEYNDNINEDSDSKSADSELFMDKDDADNISESISPGKI.

Positions 86–125 (SAEEQLHKIDSLQKKLVDIEDEKIHAIKKKDDLLKQVDDL) form a coiled coil. The segment at 141–219 (SLAPENVQED…ISESISPGKI (79 aa)) is disordered. 2 stretches are compositionally biased toward basic and acidic residues: residues 166-181 (IEQK…KIEG) and 191-204 (SDSK…FMDK). A compositionally biased stretch (polar residues) spans 210-219 (ISESISPGKI).

It belongs to the Mediator complex subunit 21 family. In terms of assembly, component of the Mediator complex.

It is found in the nucleus. Its function is as follows. Component of the Mediator complex, a coactivator involved in the regulated transcription of nearly all RNA polymerase II-dependent genes. Mediator functions as a bridge to convey information from gene-specific regulatory proteins to the basal RNA polymerase II transcription machinery. Mediator is recruited to promoters by direct interactions with regulatory proteins and serves as a scaffold for the assembly of a functional preinitiation complex with RNA polymerase II and the general transcription factors. This chain is Mediator of RNA polymerase II transcription subunit 21 (SRB7), found in Candida glabrata (strain ATCC 2001 / BCRC 20586 / JCM 3761 / NBRC 0622 / NRRL Y-65 / CBS 138) (Yeast).